We begin with the raw amino-acid sequence, 171 residues long: Co-chaperone protein HscB homolog (171 aa).

One can recognise a J domain in the interval 2-74; that stretch reads NHFELFGLPN…VSRAEYILSE (73 aa).

The protein belongs to the HscB family. In terms of assembly, interacts with HscA and stimulates its ATPase activity.

In terms of biological role, co-chaperone involved in the maturation of iron-sulfur cluster-containing proteins. Seems to help targeting proteins to be folded toward HscA. The sequence is that of Co-chaperone protein HscB homolog from Aliivibrio fischeri (strain ATCC 700601 / ES114) (Vibrio fischeri).